A 242-amino-acid chain; its full sequence is ATP synthase subunit a (242 aa).

A run of 7 helical transmembrane segments spans residues 23–43 (ISFT…AVLL), 62–82 (VELI…VGGL), 84–104 (YIPF…IGIL), 113–133 (HVSV…VLGF), 143–163 (IFLP…IKLF), 176–196 (LAAN…FVLK), and 201–221 (LAPL…FVAI).

Belongs to the ATPase A chain family. F-type ATPases have 2 components, CF(1) - the catalytic core - and CF(0) - the membrane proton channel. CF(1) has five subunits: alpha(3), beta(3), gamma(1), delta(1), epsilon(1). CF(0) has three main subunits: a(1), b(2) and c(9-12). The alpha and beta chains form an alternating ring which encloses part of the gamma chain. CF(1) is attached to CF(0) by a central stalk formed by the gamma and epsilon chains, while a peripheral stalk is formed by the delta and b chains.

The protein resides in the cell inner membrane. Key component of the proton channel; it plays a direct role in the translocation of protons across the membrane. The chain is ATP synthase subunit a from Anaplasma phagocytophilum (strain HZ).